Reading from the N-terminus, the 141-residue chain is Methylglyoxal synthase (141 aa).

Residues 1 to 141 (MNIALIAHDK…PKLQKNKSDK (141 aa)) form the MGS-like domain. Residues histidine 8, lysine 12, and 34–37 (TGTT) contribute to the substrate site. The active-site Proton donor/acceptor is the aspartate 60. A substrate-binding site is contributed by histidine 87.

This sequence belongs to the methylglyoxal synthase family.

The catalysed reaction is dihydroxyacetone phosphate = methylglyoxal + phosphate. In terms of biological role, catalyzes the formation of methylglyoxal from dihydroxyacetone phosphate. In Caldicellulosiruptor bescii (strain ATCC BAA-1888 / DSM 6725 / KCTC 15123 / Z-1320) (Anaerocellum thermophilum), this protein is Methylglyoxal synthase.